Here is a 314-residue protein sequence, read N- to C-terminus: Putative peptide transport system permease protein BruAb2_1031 (314 aa).

The next 6 helical transmembrane spans lie at 12–32, 101–121, 135–155, 177–197, 237–257, and 286–306; these read AIPV…LLPG, LALL…VVAA, LALL…VILF, WLRS…GYLA, VSVL…SVVI, and MLFL…LYTI. One can recognise an ABC transmembrane type-1 domain in the interval 95 to 304; the sequence is LPVTISLALL…AINVLVDILY (210 aa).

This sequence belongs to the binding-protein-dependent transport system permease family. In terms of assembly, the complex is composed of two ATP-binding proteins (BruAb2_1033 and BruAb2_1034), two transmembrane proteins (BruAb2_1031 and BruAb2_1032) and a solute-binding protein (BruAb2_1030).

Its subcellular location is the cell inner membrane. Probably part of an ABC transporter complex that could be involved in peptide import. Probably responsible for the translocation of the substrate across the membrane. The sequence is that of Putative peptide transport system permease protein BruAb2_1031 from Brucella abortus biovar 1 (strain 9-941).